The following is a 236-amino-acid chain: Ribose-5-phosphate isomerase A (236 aa).

Substrate is bound by residues 29–32 (SGST), 86–89 (DGAD), and 99–102 (KGGG). Glutamate 108 functions as the Proton acceptor in the catalytic mechanism. Lysine 126 contacts substrate.

This sequence belongs to the ribose 5-phosphate isomerase family. Homodimer.

The enzyme catalyses aldehydo-D-ribose 5-phosphate = D-ribulose 5-phosphate. Its pathway is carbohydrate degradation; pentose phosphate pathway; D-ribose 5-phosphate from D-ribulose 5-phosphate (non-oxidative stage): step 1/1. Catalyzes the reversible conversion of ribose-5-phosphate to ribulose 5-phosphate. The polypeptide is Ribose-5-phosphate isomerase A (Prochlorococcus marinus (strain NATL2A)).